Reading from the N-terminus, the 575-residue chain is Preterminal protein (575 aa).

Residues 309 to 318 (RLPRVTRRRR) carry the Nuclear localization signal motif. Residues 314-340 (TRRRRRPPSPAPPPEEIEEAAMEVEEP) are disordered. Positions 328–340 (EEIEEAAMEVEEP) are enriched in acidic residues. O-(5'-phospho-DNA)-serine is present on S510.

The protein belongs to the adenoviridae terminal protein family. Heterodimer with the polymerase; this heterodimer binds to bp 9 to 18 of the genome. Interacts with host POU2F1; POU2F1 binds to the auxiliary sequences in the inverted terminal repeats and tethers the pTP-POL heterodimer to the origin DNA thereby participating in the assembly of the pre-initiation complex (POL-TP-DBP-NFIA-POU2F1). Post-translationally, preterminal protein is used to replicate viral genome, upon genomic encapsidation it is processed first into iTP and finally into TP by adenovirus protease.

The protein resides in the host nucleus matrix. Its function is as follows. Protein covalently bound to the viral DNA that acts as a primer for viral genomic replication by DNA strand displacement. Assembles on the viral origin of replication in an initiation complex with viral polymerase, DBP, host NFIA and host POU2F1/OCT1. During initiation, the polymerase covalently couples the first dCTP with Ser-580 of pTP. The terminal protein stimulates the template activity over 20 fold compared to protein-free templates. Neo-synthesized viral genomes are linked to two preterminal proteins, one for each 5' end. These new genomes are encapsidated in the nucleus, and during capsid maturation by viral protease, preterminal protein is first cleaved into intermediary (iTP), then into mature TP. May play a role in host nuclear matrix localization of genomic DNA. In Fowl adenovirus A serotype 1 (strain CELO / Phelps) (FAdV-1), this protein is Preterminal protein.